The sequence spans 569 residues: Sulfite reductase [NADPH] hemoprotein beta-component (569 aa).

Residues C433, C439, C478, and C482 each contribute to the [4Fe-4S] cluster site. Siroheme is bound at residue C482.

This sequence belongs to the nitrite and sulfite reductase 4Fe-4S domain family. As to quaternary structure, alpha(8)-beta(8). The alpha component is a flavoprotein, the beta component is a hemoprotein. Siroheme is required as a cofactor. It depends on [4Fe-4S] cluster as a cofactor.

It catalyses the reaction hydrogen sulfide + 3 NADP(+) + 3 H2O = sulfite + 3 NADPH + 4 H(+). It participates in sulfur metabolism; hydrogen sulfide biosynthesis; hydrogen sulfide from sulfite (NADPH route): step 1/1. Functionally, component of the sulfite reductase complex that catalyzes the 6-electron reduction of sulfite to sulfide. This is one of several activities required for the biosynthesis of L-cysteine from sulfate. This Shewanella sediminis (strain HAW-EB3) protein is Sulfite reductase [NADPH] hemoprotein beta-component.